The primary structure comprises 279 residues: Oxygen-dependent coproporphyrinogen-III oxidase (279 aa).

Residue Ser102 coordinates substrate. Residues His106 and His116 each contribute to the a divalent metal cation site. Residue His116 is the Proton donor of the active site. Asn118–Arg120 is a binding site for substrate. The a divalent metal cation site is built by His149 and His179. The segment at Tyr244–Ala279 is important for dimerization.

This sequence belongs to the aerobic coproporphyrinogen-III oxidase family. As to quaternary structure, homodimer. Requires a divalent metal cation as cofactor.

It localises to the cytoplasm. It carries out the reaction coproporphyrinogen III + O2 + 2 H(+) = protoporphyrinogen IX + 2 CO2 + 2 H2O. The protein operates within porphyrin-containing compound metabolism; protoporphyrin-IX biosynthesis; protoporphyrinogen-IX from coproporphyrinogen-III (O2 route): step 1/1. Functionally, involved in the heme biosynthesis. Catalyzes the aerobic oxidative decarboxylation of propionate groups of rings A and B of coproporphyrinogen-III to yield the vinyl groups in protoporphyrinogen-IX. In Rickettsia bellii (strain OSU 85-389), this protein is Oxygen-dependent coproporphyrinogen-III oxidase.